The chain runs to 96 residues: UPF0235 protein YggU (96 aa).

It belongs to the UPF0235 family.

The polypeptide is UPF0235 protein YggU (Salmonella agona (strain SL483)).